Here is a 333-residue protein sequence, read N- to C-terminus: tRNA N6-adenosine threonylcarbamoyltransferase (333 aa).

Fe cation-binding residues include histidine 111 and histidine 115. Substrate is bound by residues 134–138 (VVSGG), aspartate 167, glycine 180, aspartate 184, and asparagine 269. Aspartate 297 lines the Fe cation pocket.

Belongs to the KAE1 / TsaD family. The cofactor is Fe(2+).

It is found in the cytoplasm. The enzyme catalyses L-threonylcarbamoyladenylate + adenosine(37) in tRNA = N(6)-L-threonylcarbamoyladenosine(37) in tRNA + AMP + H(+). In terms of biological role, required for the formation of a threonylcarbamoyl group on adenosine at position 37 (t(6)A37) in tRNAs that read codons beginning with adenine. Is involved in the transfer of the threonylcarbamoyl moiety of threonylcarbamoyl-AMP (TC-AMP) to the N6 group of A37, together with TsaE and TsaB. TsaD likely plays a direct catalytic role in this reaction. The polypeptide is tRNA N6-adenosine threonylcarbamoyltransferase (Carboxydothermus hydrogenoformans (strain ATCC BAA-161 / DSM 6008 / Z-2901)).